The primary structure comprises 142 residues: Probable transport accessory protein MmpS5 (142 aa).

The helical transmembrane segment at 7–26 (RAWIPLLILVVVAIAGFTVQ) threads the bilayer.

This sequence belongs to the MmpS family.

The protein resides in the cell membrane. The chain is Probable transport accessory protein MmpS5 (mmpS5) from Mycobacterium bovis (strain ATCC BAA-935 / AF2122/97).